A 526-amino-acid polypeptide reads, in one-letter code: Protein ERGIC-53-like (526 aa).

The first 25 residues, 1-25 (MPAVSGPGPLFCLLLLLLDPHSPET), serve as a signal peptide directing secretion. Over 26–462 (GCPPLRRFEY…QPPRASSCLQ (437 aa)) the chain is Lumenal. The L-type lectin-like domain maps to 31–252 (RRFEYKLSFK…DVLSFLTFSL (222 aa)). Asn75 carries N-linked (GlcNAc...) asparagine glycosylation. Cys176 and Cys215 are joined by a disulfide. The helical transmembrane segment at 463–483 (PGIFLFYLLIQTVGFFGYVHF) threads the bilayer. At 484–526 (RQELNKSLQECLSTGSLPLGPAPHTPRALGILRRQPLPASMPA) the chain is on the cytoplasmic side.

Highly expressed in normal and neoplastic prostate. Also expressed in cardiac atrium, salivary gland, spleen and selective cells in the CNS.

It localises to the endoplasmic reticulum-Golgi intermediate compartment membrane. This Homo sapiens (Human) protein is Protein ERGIC-53-like (LMAN1L).